The primary structure comprises 507 residues: NADH-quinone oxidoreductase subunit N (507 aa).

15 helical membrane-spanning segments follow: residues 17 to 37 (LVTLSPLILLAAAAVVVMLTA), 46 to 66 (VMILTLAGLVLSFMALFLSQG), 81 to 101 (YALFFIGLIVVATFVVAILCY), 113 to 133 (ALYILLLLAALGGGVLVASSH), 134 to 154 (FASFLLGLELLSISLFALIAY), 168 to 188 (YLILAGFSSGLLLFGMALVYA), 190 to 210 (LGTMQFVKIGTMLAAPGAALE), 211 to 231 (LYGLAGLALIVTGVGFKLALV), 245 to 265 (PVPITAFIATASKGAMLVLLL), 279 to 299 (ITFALSLIAVATILVGNLLAL), 307 to 327 (ILAYSSIAQLGYLLVGFLAFD), 334 to 354 (VAYFLTAYFVTMLGAFGVVTV), 392 to 412 (AGVFTAMLLSLAGIPLTMGFI), 425 to 445 (SLWMPVITLVIGSIIGLFYYM), and 478 to 498 (LAALALLLIWLGIFPAQLIGV).

This sequence belongs to the complex I subunit 2 family. NDH-1 is composed of 14 different subunits. Subunits NuoA, H, J, K, L, M, N constitute the membrane sector of the complex.

The protein resides in the cell inner membrane. It carries out the reaction a quinone + NADH + 5 H(+)(in) = a quinol + NAD(+) + 4 H(+)(out). Its function is as follows. NDH-1 shuttles electrons from NADH, via FMN and iron-sulfur (Fe-S) centers, to quinones in the respiratory chain. The immediate electron acceptor for the enzyme in this species is believed to be ubiquinone. Couples the redox reaction to proton translocation (for every two electrons transferred, four hydrogen ions are translocated across the cytoplasmic membrane), and thus conserves the redox energy in a proton gradient. This chain is NADH-quinone oxidoreductase subunit N, found in Nitrosospira multiformis (strain ATCC 25196 / NCIMB 11849 / C 71).